Here is a 978-residue protein sequence, read N- to C-terminus: Rab3 GTPase-activating protein catalytic subunit (978 aa).

Disordered stretches follow at residues 533 to 554 (EGKK…TASD), 586 to 621 (HSDT…RLHQ), and 908 to 936 (EEEP…GREL). Positions 540-554 (LYSSSESSVNKTASD) are enriched in polar residues. Basic and acidic residues-rich tracts occupy residues 586-619 (HSDT…EGRL) and 909-922 (EEPK…DRRQ).

The protein belongs to the Rab3-GAP catalytic subunit family. In terms of assembly, the Rab3 GTPase-activating complex is a heterodimer composed of rab3gap1 and rab3gap2. The Rab3 GTPase-activating complex interacts with DMXL2. Interacts with LMAN1.

Its subcellular location is the cytoplasm. It localises to the endoplasmic reticulum. It is found in the golgi apparatus. The protein localises to the cis-Golgi network. In terms of biological role, catalytic subunit of the Rab3 GTPase-activating (Rab3GAP) complex composed of rab3gap1 and rab3gap2, which has GTPase-activating protein (GAP) activity towards various Rab3 subfamily members (RAB3A, RAB3B, RAB3C and RAB3D), RAB5A and RAB43, and guanine nucleotide exchange factor (GEF) activity towards RAB18. As part of the Rab3GAP complex, acts as a GAP for Rab3 proteins by converting active RAB3-GTP to the inactive form RAB3-GDP. Rab3 proteins are involved in regulated exocytosis of neurotransmitters and hormones. The Rab3GAP complex, acts as a GEF for RAB18 by promoting the conversion of inactive RAB18-GDP to the active form RAB18-GTP. Recruits and stabilizes RAB18 at the cis-Golgi membrane where RAB18 is most likely activated. Also involved in RAB18 recruitment at the endoplasmic reticulum (ER) membrane where it maintains proper ER structure. Required for normal eye and brain development. May participate in neurodevelopmental processes such as proliferation, migration and differentiation before synapse formation, and non-synaptic vesicular release of neurotransmitters. This is Rab3 GTPase-activating protein catalytic subunit (rab3gap1) from Xenopus laevis (African clawed frog).